The following is a 261-amino-acid chain: 5'-nucleotidase SurE (261 aa).

Positions 8, 9, 43, and 96 each coordinate a divalent metal cation.

The protein belongs to the SurE nucleotidase family. A divalent metal cation serves as cofactor.

It localises to the cytoplasm. The enzyme catalyses a ribonucleoside 5'-phosphate + H2O = a ribonucleoside + phosphate. Functionally, nucleotidase that shows phosphatase activity on nucleoside 5'-monophosphates. This is 5'-nucleotidase SurE from Cereibacter sphaeroides (strain KD131 / KCTC 12085) (Rhodobacter sphaeroides).